We begin with the raw amino-acid sequence, 198 residues long: 3-isopropylmalate dehydratase small subunit (198 aa).

Belongs to the LeuD family. LeuD type 1 subfamily. As to quaternary structure, heterodimer of LeuC and LeuD.

It catalyses the reaction (2R,3S)-3-isopropylmalate = (2S)-2-isopropylmalate. It functions in the pathway amino-acid biosynthesis; L-leucine biosynthesis; L-leucine from 3-methyl-2-oxobutanoate: step 2/4. Catalyzes the isomerization between 2-isopropylmalate and 3-isopropylmalate, via the formation of 2-isopropylmaleate. The chain is 3-isopropylmalate dehydratase small subunit from Corynebacterium jeikeium (strain K411).